The chain runs to 95 residues: MEKIKYGFGEIEAAASDIQSTSGRINSLLEDLKAHIRPMAAAWEGESAQAYNEAQQQWDSSAAELNTILSTISNTVRQGNDRMSEVNRMAAASWS.

This sequence belongs to the WXG100 family. ESAT-6 subfamily. As to quaternary structure, forms a tight 1:1 complex with EsxB.

In Corynebacterium diphtheriae (strain ATCC 700971 / NCTC 13129 / Biotype gravis), this protein is ESAT-6-like protein EsxA.